Here is a 501-residue protein sequence, read N- to C-terminus: Protein translocase subunit SecD (501 aa).

The next 6 membrane-spanning stretches (helical) occupy residues 9–29 (NLWL…YAVV), 339–359 (AIEQ…VVLI), 371–391 (ISIF…GATL), 394–414 (PGIA…VLIF), 447–467 (VTLL…VKGF), and 470–490 (TLAL…KVFL).

This sequence belongs to the SecD/SecF family. SecD subfamily. As to quaternary structure, forms a complex with SecF. Part of the essential Sec protein translocation apparatus which comprises SecA, SecYEG and auxiliary proteins SecDF. Other proteins may also be involved.

The protein resides in the cell inner membrane. Its function is as follows. Part of the Sec protein translocase complex. Interacts with the SecYEG preprotein conducting channel. SecDF uses the proton motive force (PMF) to complete protein translocation after the ATP-dependent function of SecA. In Aquifex aeolicus (strain VF5), this protein is Protein translocase subunit SecD.